Consider the following 207-residue polypeptide: MSNKDYKKLYLVTDYRIPFNELLEKTKEALIGGVSIVQYRAKNKETKEMCKEARALKKLCDEFGALFLVNDRIDVALAVKAHGVHIGQDDMDVSIAREIMPKDAIIGVTVHNKEEALKAIKDGADNLGVGALFSTNSKDDATLMTLETLREIKSVSNIPLYGIGGITPYNLNKDILENLDGVAVISALLNSDNIREKSKEFLNILSK.

4-amino-2-methyl-5-(diphosphooxymethyl)pyrimidine is bound by residues 38–42 (QYRAK) and Asn-70. Mg(2+) contacts are provided by Asp-71 and Asp-90. Residue Thr-109 coordinates 4-amino-2-methyl-5-(diphosphooxymethyl)pyrimidine. Residue 135–137 (TNS) participates in 2-[(2R,5Z)-2-carboxy-4-methylthiazol-5(2H)-ylidene]ethyl phosphate binding. Lys-138 provides a ligand contact to 4-amino-2-methyl-5-(diphosphooxymethyl)pyrimidine. 2-[(2R,5Z)-2-carboxy-4-methylthiazol-5(2H)-ylidene]ethyl phosphate is bound by residues Gly-165 and 185–186 (IS).

This sequence belongs to the thiamine-phosphate synthase family. Mg(2+) is required as a cofactor.

It catalyses the reaction 2-[(2R,5Z)-2-carboxy-4-methylthiazol-5(2H)-ylidene]ethyl phosphate + 4-amino-2-methyl-5-(diphosphooxymethyl)pyrimidine + 2 H(+) = thiamine phosphate + CO2 + diphosphate. The catalysed reaction is 2-(2-carboxy-4-methylthiazol-5-yl)ethyl phosphate + 4-amino-2-methyl-5-(diphosphooxymethyl)pyrimidine + 2 H(+) = thiamine phosphate + CO2 + diphosphate. It carries out the reaction 4-methyl-5-(2-phosphooxyethyl)-thiazole + 4-amino-2-methyl-5-(diphosphooxymethyl)pyrimidine + H(+) = thiamine phosphate + diphosphate. It participates in cofactor biosynthesis; thiamine diphosphate biosynthesis; thiamine phosphate from 4-amino-2-methyl-5-diphosphomethylpyrimidine and 4-methyl-5-(2-phosphoethyl)-thiazole: step 1/1. Functionally, condenses 4-methyl-5-(beta-hydroxyethyl)thiazole monophosphate (THZ-P) and 2-methyl-4-amino-5-hydroxymethyl pyrimidine pyrophosphate (HMP-PP) to form thiamine monophosphate (TMP). This is Thiamine-phosphate synthase from Clostridium perfringens (strain SM101 / Type A).